Here is a 157-residue protein sequence, read N- to C-terminus: Small ribosomal subunit protein uS7 (157 aa).

It belongs to the universal ribosomal protein uS7 family. Part of the 30S ribosomal subunit. Contacts proteins S9 and S11.

In terms of biological role, one of the primary rRNA binding proteins, it binds directly to 16S rRNA where it nucleates assembly of the head domain of the 30S subunit. Is located at the subunit interface close to the decoding center, probably blocks exit of the E-site tRNA. The polypeptide is Small ribosomal subunit protein uS7 (Albidiferax ferrireducens (strain ATCC BAA-621 / DSM 15236 / T118) (Rhodoferax ferrireducens)).